The sequence spans 134 residues: Small ribosomal subunit protein uS8 (134 aa).

The protein belongs to the universal ribosomal protein uS8 family. In terms of assembly, part of the 30S ribosomal subunit. Contacts proteins S5 and S12.

In terms of biological role, one of the primary rRNA binding proteins, it binds directly to 16S rRNA central domain where it helps coordinate assembly of the platform of the 30S subunit. This is Small ribosomal subunit protein uS8 from Petrotoga mobilis (strain DSM 10674 / SJ95).